The following is a 231-amino-acid chain: Lipoprotein-releasing system ATP-binding protein LolD (231 aa).

Residues 6–231 enclose the ABC transporter domain; it reads LQVQAVSKSY…YLQAVAEHAQ (226 aa). Residue 42-49 coordinates ATP; it reads GTSGSGKS.

Belongs to the ABC transporter superfamily. Lipoprotein translocase (TC 3.A.1.125) family. In terms of assembly, the complex is composed of two ATP-binding proteins (LolD) and two transmembrane proteins (LolC and LolE).

Its subcellular location is the cell inner membrane. Its function is as follows. Part of the ABC transporter complex LolCDE involved in the translocation of mature outer membrane-directed lipoproteins, from the inner membrane to the periplasmic chaperone, LolA. Responsible for the formation of the LolA-lipoprotein complex in an ATP-dependent manner. In Shewanella sp. (strain MR-4), this protein is Lipoprotein-releasing system ATP-binding protein LolD.